The sequence spans 1396 residues: Helicase ARIP4 (1396 aa).

Residues 1-103 are disordered; sequence MSDASISGSE…LQKPANLRRN (103 aa). The segment covering 11-49 has biased composition (acidic residues); that stretch reads PELDPEDMEEEEEDDEDDDEEEEEEEDEEDNDGDDEDDK. Over residues 75 to 84 the composition is skewed to polar residues; sequence RSTTSGQSGQ. In terms of domain architecture, Helicase ATP-binding spans 290 to 510; it reads RFSGSSGFGC…WCMVDFVRPD (221 aa). 303-310 serves as a coordination point for ATP; it reads HSMGLGKT. Residues 461-464 carry the DEAH box motif; that stretch reads DEGH. Positions 549–553 match the LXXLL motif 1 motif; it reads LHSLL. The Helicase C-terminal domain occupies 717 to 891; the sequence is KMVLLFHLIE…RVVDDLNPEV (175 aa). Disordered regions lie at residues 1117–1168 and 1194–1250; these read SGKQ…PDSP and NLGL…STMN. Composition is skewed to polar residues over residues 1128-1148 and 1218-1238; these read QATS…RHST and DQSS…SYPN. Residues 1273-1277 carry the LXXLL motif 2 motif; the sequence is LPSLL. The segment at 1340–1396 is disordered; the sequence is GLPTNNPASTFPGYLSSHSNYQASPGTSSRPLPSGETELGSCEEDGRDDDVVEVTGE. Residues 1355–1370 are compositionally biased toward polar residues; that stretch reads SSHSNYQASPGTSSRP. The segment covering 1380 to 1396 has biased composition (acidic residues); that stretch reads SCEEDGRDDDVVEVTGE.

It belongs to the SNF2/RAD54 helicase family.

The protein resides in the nucleus. The catalysed reaction is ATP + H2O = ADP + phosphate + H(+). In terms of biological role, DNA helicase that modulates androgen receptor (AR)-dependent transactivation in a promoter-dependent manner. This Xenopus tropicalis (Western clawed frog) protein is Helicase ARIP4 (rad54l2).